The following is a 55-amino-acid chain: Large ribosomal subunit protein bL33 (55 aa).

Over residues 1 to 11 the composition is skewed to basic and acidic residues; sequence MAKSGRDKIKL. A disordered region spans residues 1–28; it reads MAKSGRDKIKLESTAGTGHFYTTTKNKR. Residues 14 to 24 show a composition bias toward polar residues; that stretch reads TAGTGHFYTTT.

This sequence belongs to the bacterial ribosomal protein bL33 family.

This is Large ribosomal subunit protein bL33 from Janthinobacterium sp. (strain Marseille) (Minibacterium massiliensis).